The primary structure comprises 193 residues: Recombination protein RecR (193 aa).

The C4-type; degenerate zinc finger occupies Cys61–Cys76. One can recognise a Toprim domain in the interval Ser84–Pro170.

The protein belongs to the RecR family.

Functionally, may play a role in DNA repair. It seems to be involved in an RecBC-independent recombinational process of DNA repair. It may act with RecF and RecO. This Helicobacter pylori (strain J99 / ATCC 700824) (Campylobacter pylori J99) protein is Recombination protein RecR.